A 360-amino-acid polypeptide reads, in one-letter code: UDP-N-acetylglucosamine--N-acetylmuramyl-(pentapeptide) pyrophosphoryl-undecaprenol N-acetylglucosamine transferase (360 aa).

UDP-N-acetyl-alpha-D-glucosamine is bound by residues Ser-198 and Gln-289.

The protein belongs to the glycosyltransferase 28 family. MurG subfamily.

It localises to the cell membrane. The catalysed reaction is Mur2Ac(oyl-L-Ala-gamma-D-Glu-L-Lys-D-Ala-D-Ala)-di-trans,octa-cis-undecaprenyl diphosphate + UDP-N-acetyl-alpha-D-glucosamine = beta-D-GlcNAc-(1-&gt;4)-Mur2Ac(oyl-L-Ala-gamma-D-Glu-L-Lys-D-Ala-D-Ala)-di-trans,octa-cis-undecaprenyl diphosphate + UDP + H(+). It functions in the pathway cell wall biogenesis; peptidoglycan biosynthesis. In terms of biological role, cell wall formation. Catalyzes the transfer of a GlcNAc subunit on undecaprenyl-pyrophosphoryl-MurNAc-pentapeptide (lipid intermediate I) to form undecaprenyl-pyrophosphoryl-MurNAc-(pentapeptide)GlcNAc (lipid intermediate II). The sequence is that of UDP-N-acetylglucosamine--N-acetylmuramyl-(pentapeptide) pyrophosphoryl-undecaprenol N-acetylglucosamine transferase from Streptococcus pyogenes serotype M49 (strain NZ131).